The following is a 186-amino-acid chain: Interferon beta-2 (186 aa).

The first 21 residues, 1 to 21 (MTHRCLLQMVLLLCFSTTALS), serve as a signal peptide directing secretion. Cysteines 52 and 161 form a disulfide. 2 N-linked (GlcNAc...) asparagine glycosylation sites follow: N131 and N173.

The protein belongs to the alpha/beta interferon family. In terms of assembly, monomer.

The protein localises to the secreted. Its function is as follows. Has antiviral, antibacterial and anticancer activities. This is Interferon beta-2 (IFNB2) from Bos taurus (Bovine).